Consider the following 601-residue polypeptide: Probable sphingosine-1-phosphate lyase (601 aa).

Position 360 is an N6-(pyridoxal phosphate)lysine (Lys-360).

This sequence belongs to the group II decarboxylase family. Sphingosine-1-phosphate lyase subfamily. It depends on pyridoxal 5'-phosphate as a cofactor.

The enzyme catalyses sphinganine 1-phosphate = hexadecanal + phosphoethanolamine. In terms of biological role, cleaves phosphorylated sphingoid bases (PSBs), such as sphingosine-1-phosphate, into fatty aldehydes and phosphoethanolamine. Possibly implicated in influencing the macrophage autophagy pathway. The protein is Probable sphingosine-1-phosphate lyase of Legionella pneumophila subsp. pneumophila (strain Philadelphia 1 / ATCC 33152 / DSM 7513).